Reading from the N-terminus, the 751-residue chain is Photosystem I P700 chlorophyll a apoprotein A1 (751 aa).

The next 8 membrane-spanning stretches (helical) occupy residues 73–96 (VFSA…FHGA), 159–182 (LYIT…FHYH), 198–222 (LNHH…HVSL), 294–312 (VAHH…GHMY), 349–372 (WHAQ…QHMY), 388–414 (LSLF…IFMV), 436–458 (AIIS…LYIH), and 533–551 (FLVH…LILL). [4Fe-4S] cluster contacts are provided by cysteine 575 and cysteine 584. A run of 2 helical transmembrane segments spans residues 591–612 (HVFL…HFSW) and 665–687 (LSAY…MFLF). Histidine 676 contributes to the chlorophyll a' binding site. Chlorophyll a contacts are provided by methionine 684 and tyrosine 692. Tryptophan 693 is a binding site for phylloquinone. A helical membrane pass occupies residues 725–745 (AVGVAHYLLGGIATTWSFFLA).

It belongs to the PsaA/PsaB family. The PsaA/B heterodimer binds the P700 chlorophyll special pair and subsequent electron acceptors. PSI consists of a core antenna complex that captures photons, and an electron transfer chain that converts photonic excitation into a charge separation. The eukaryotic PSI reaction center is composed of at least 11 subunits. P700 is a chlorophyll a/chlorophyll a' dimer, A0 is one or more chlorophyll a, A1 is one or both phylloquinones and FX is a shared 4Fe-4S iron-sulfur center. is required as a cofactor.

The protein resides in the plastid. It localises to the chloroplast thylakoid membrane. It catalyses the reaction reduced [plastocyanin] + hnu + oxidized [2Fe-2S]-[ferredoxin] = oxidized [plastocyanin] + reduced [2Fe-2S]-[ferredoxin]. Functionally, psaA and PsaB bind P700, the primary electron donor of photosystem I (PSI), as well as the electron acceptors A0, A1 and FX. PSI is a plastocyanin/cytochrome c6-ferredoxin oxidoreductase, converting photonic excitation into a charge separation, which transfers an electron from the donor P700 chlorophyll pair to the spectroscopically characterized acceptors A0, A1, FX, FA and FB in turn. Oxidized P700 is reduced on the lumenal side of the thylakoid membrane by plastocyanin or cytochrome c6. This is Photosystem I P700 chlorophyll a apoprotein A1 from Euglena gracilis.